A 740-amino-acid polypeptide reads, in one-letter code: Polyribonucleotide nucleotidyltransferase (740 aa).

Residues aspartate 492 and aspartate 498 each contribute to the Mg(2+) site. The KH domain occupies 559–618 (PMVQTLEIQKEKIRDVIGLGGKVIKELCKTFDVEIDISENGEVKVWGNVGENVKKAVQSI). The 69-residue stretch at 628–696 (GDIFDGEVVK…HKNRVKLTLR (69 aa)) folds into the S1 motif domain.

The protein belongs to the polyribonucleotide nucleotidyltransferase family. The cofactor is Mg(2+).

It localises to the cytoplasm. It catalyses the reaction RNA(n+1) + phosphate = RNA(n) + a ribonucleoside 5'-diphosphate. Its function is as follows. Involved in mRNA degradation. Catalyzes the phosphorolysis of single-stranded polyribonucleotides processively in the 3'- to 5'-direction. The sequence is that of Polyribonucleotide nucleotidyltransferase from Orientia tsutsugamushi (strain Boryong) (Rickettsia tsutsugamushi).